The following is a 481-amino-acid chain: UDP-glycosyltransferase 88F4 (481 aa).

UDP-alpha-D-glucose-binding positions include S288, 357–358 (WA), 375–383 (HCGWNSVLE), and 397–400 (YAEQ).

The protein belongs to the UDP-glycosyltransferase family.

Its function is as follows. Glycosyltransferase that may possess chalcone and dihydrochalcone 2'-O-glucosyltransferase activity. In Malus domestica (Apple), this protein is UDP-glycosyltransferase 88F4.